Here is a 145-residue protein sequence, read N- to C-terminus: Large ribosomal subunit protein uL13 (145 aa).

This sequence belongs to the universal ribosomal protein uL13 family. As to quaternary structure, part of the 50S ribosomal subunit.

This protein is one of the early assembly proteins of the 50S ribosomal subunit, although it is not seen to bind rRNA by itself. It is important during the early stages of 50S assembly. The chain is Large ribosomal subunit protein uL13 from Bacillus thuringiensis (strain Al Hakam).